Consider the following 192-residue polypeptide: Putative 3-methyladenine DNA glycosylase (192 aa).

Belongs to the DNA glycosylase MPG family.

This Bdellovibrio bacteriovorus (strain ATCC 15356 / DSM 50701 / NCIMB 9529 / HD100) protein is Putative 3-methyladenine DNA glycosylase.